A 170-amino-acid polypeptide reads, in one-letter code: Photosystem II extrinsic protein V (170 aa).

The N-terminal stretch at 1-33 is a signal peptide; that stretch reads MASLFASLGRSLIKLLIVLPVIIGLSISSPAMA. Heme c contacts are provided by C70, C73, H74, and H125.

It belongs to the cytochrome c family. PsbV subfamily. As to quaternary structure, PSII is composed of 1 copy each of membrane proteins PsbA, PsbB, PsbC, PsbD, PsbE, PsbF, PsbH, PsbI, PsbJ, PsbK, PsbL, PsbM, PsbT, PsbX, PsbY, Psb30/Ycf12, peripheral proteins PsbO, CyanoQ (PsbQ), PsbU, PsbV and a large number of cofactors. It forms dimeric complexes. Heme c serves as cofactor.

Its subcellular location is the cellular thylakoid membrane. Its function is as follows. One of the extrinsic, lumenal subunits of photosystem II (PSII). PSII is a light-driven water plastoquinone oxidoreductase, using light energy to abstract electrons from H(2)O, generating a proton gradient subsequently used for ATP formation. The extrinsic proteins stabilize the structure of photosystem II oxygen-evolving complex (OEC), the ion environment of oxygen evolution and protect the OEC against heat-induced inactivation. Low-potential cytochrome c that plays a role in the OEC of PSII. This is Photosystem II extrinsic protein V from Prochlorococcus marinus (strain MIT 9313).